We begin with the raw amino-acid sequence, 458 residues long: MKQSNSKNTPPIASKKVFIKTYGCQMNVYDSQRMNDSLSAQGYVTTQTPNDADLILVNTCHIREKAAEKLYSDLGRLRMMRQKRTSEKPLMIGVTGCVAQAEGDEILRRSPTVDLVVGPQMYHRLPELLQQAQQGKKIVETNYAVEDKFNHLPPHNKRAVQKRGVSAFLTVQEGCDKFCTFCVVPYTRGAEISRSVEQITDEARQLIEADVKEITLLGQNVNGWHGQSTDGKTWRLGDLLYHLAKLDGLKRLRYTTSHPRDMDESLIAAHRNLDILMPYLHLPVQSGSDRILKAMNRQHKAIDYLNLIEKIRTARPDIAFSGDFIVGFPGETDDDFEETIKLIEQVGYSSAYSFKYSPRPGTLGATMKNQVDEKVKNDRLQRLQALLLDQQHRFLRSKIGQTTDVLIEKDGRHPGQIVGRSPWLLPVVVDTQAPIGTVMAIQITNASSNSFVGEKANS.

The MTTase N-terminal domain maps to 15–134; it reads KKVFIKTYGC…LPELLQQAQQ (120 aa). [4Fe-4S] cluster contacts are provided by C24, C60, C97, C175, C179, and C182. One can recognise a Radical SAM core domain in the interval 161–393; it reads QKRGVSAFLT…QALLLDQQHR (233 aa). Positions 396–457 constitute a TRAM domain; it reads RSKIGQTTDV…SNSFVGEKAN (62 aa).

It belongs to the methylthiotransferase family. MiaB subfamily. In terms of assembly, monomer. It depends on [4Fe-4S] cluster as a cofactor.

It is found in the cytoplasm. The catalysed reaction is N(6)-dimethylallyladenosine(37) in tRNA + (sulfur carrier)-SH + AH2 + 2 S-adenosyl-L-methionine = 2-methylsulfanyl-N(6)-dimethylallyladenosine(37) in tRNA + (sulfur carrier)-H + 5'-deoxyadenosine + L-methionine + A + S-adenosyl-L-homocysteine + 2 H(+). Catalyzes the methylthiolation of N6-(dimethylallyl)adenosine (i(6)A), leading to the formation of 2-methylthio-N6-(dimethylallyl)adenosine (ms(2)i(6)A) at position 37 in tRNAs that read codons beginning with uridine. This chain is tRNA-2-methylthio-N(6)-dimethylallyladenosine synthase, found in Bartonella bacilliformis (strain ATCC 35685 / KC583 / Herrer 020/F12,63).